The sequence spans 902 residues: Protein translocase subunit SecA (902 aa).

ATP contacts are provided by residues glutamine 87, 105-109 (GEGKT), and aspartate 512. Disordered stretches follow at residues 565–584 (RRID…PGSS) and 840–902 (VEEQ…GKLK). Basic and acidic residues-rich tracts occupy residues 840-859 (VEEQ…HEDA) and 873-882 (QVREGAKVGR). The Zn(2+) site is built by cysteine 886, cysteine 888, cysteine 897, and histidine 898. Residues 892–902 (KKYKQCHGKLK) are compositionally biased toward basic residues.

This sequence belongs to the SecA family. As to quaternary structure, monomer and homodimer. Part of the essential Sec protein translocation apparatus which comprises SecA, SecYEG and auxiliary proteins SecDF-YajC and YidC. Requires Zn(2+) as cofactor.

It localises to the cell inner membrane. The protein localises to the cytoplasm. It catalyses the reaction ATP + H2O + cellular proteinSide 1 = ADP + phosphate + cellular proteinSide 2.. Functionally, part of the Sec protein translocase complex. Interacts with the SecYEG preprotein conducting channel. Has a central role in coupling the hydrolysis of ATP to the transfer of proteins into and across the cell membrane, serving both as a receptor for the preprotein-SecB complex and as an ATP-driven molecular motor driving the stepwise translocation of polypeptide chains across the membrane. The polypeptide is Protein translocase subunit SecA (Alteromonas mediterranea (strain DSM 17117 / CIP 110805 / LMG 28347 / Deep ecotype)).